We begin with the raw amino-acid sequence, 1694 residues long: Clathrin heavy chain (1694 aa).

Positions 1-478 (MTNLPIRFQE…HDRKLALSIY (478 aa)) are globular terminal domain. WD40-like repeat stretches follow at residues 23 to 67 (SIGF…KQMK), 68 to 107 (TDAAIMNPKEPILALKIGQVLQLISIEQKMQLKSCQMQEP), 108 to 149 (LEFW…PDLQ), 150 to 195 (NTEI…QSIE), 196 to 256 (GHAA…EIGA), 257 to 300 (SDFP…ISNE), and 301 to 329 (NIFVTAFEESTNGIIAVNRKGQVLSVSID). The interval 448-464 (EKWLTEDKLECSEQLGD) is binding site for the uncoating ATPase, involved in lattice disassembly. Positions 479–522 (YRANASDKVITLFAETGEFDKIIAYCKKFNYKPDFMFLLQRMAN) are flexible linker. The heavy chain arm stretch occupies residues 523–1694 (ANPMGAADFA…QQNYNQYGGF (1172 aa)). CHCR repeat units lie at residues 537–681 (KEEG…QNLQ), 687–829 (AVSY…QEDY), 834–973 (IMSV…SLID), 980–1125 (LPES…VKEC), 1129–1270 (FIKA…FRLA), 1275–1421 (INII…LLIN), and 1424–1567 (LSVL…NSAF). Residues 1214–1523 (AAKVLYTNIS…YLYKKNNRWA (310 aa)) form an involved in binding clathrin light chain region. Positions 1551 to 1694 (GEELLQYFVD…QQNYNQYGGF (144 aa)) are trimerization. Residues 1610–1640 (KVDQLVDDFKARQKKTEEEKEQQNIESSQYQ) adopt a coiled-coil conformation.

Belongs to the clathrin heavy chain family. As to quaternary structure, clathrin coats are formed from molecules containing 3 heavy chains and 3 light chains.

The protein localises to the cytoplasmic vesicle membrane. It localises to the membrane. It is found in the coated pit. Functionally, clathrin is the major protein of the polyhedral coat of coated pits and vesicles. The sequence is that of Clathrin heavy chain (chcA) from Dictyostelium discoideum (Social amoeba).